Here is a 467-residue protein sequence, read N- to C-terminus: Ribulose bisphosphate carboxylase large chain (467 aa).

Position 5 is an N6,N6,N6-trimethyllysine (Lys5). Substrate is bound by residues Asn114 and Thr164. Lys166 functions as the Proton acceptor in the catalytic mechanism. Lys168 contributes to the substrate binding site. Mg(2+)-binding residues include Lys192, Asp194, and Glu195. An N6-carboxylysine modification is found at Lys192. The active-site Proton acceptor is the His285. Substrate-binding residues include Arg286, His318, and Ser370.

This sequence belongs to the RuBisCO large chain family. Type I subfamily. In terms of assembly, heterohexadecamer of 8 large chains and 8 small chains; disulfide-linked. The disulfide link is formed within the large subunit homodimers. Mg(2+) is required as a cofactor. In terms of processing, the disulfide bond which can form in the large chain dimeric partners within the hexadecamer appears to be associated with oxidative stress and protein turnover.

Its subcellular location is the plastid. The protein localises to the chloroplast. The enzyme catalyses 2 (2R)-3-phosphoglycerate + 2 H(+) = D-ribulose 1,5-bisphosphate + CO2 + H2O. It catalyses the reaction D-ribulose 1,5-bisphosphate + O2 = 2-phosphoglycolate + (2R)-3-phosphoglycerate + 2 H(+). RuBisCO catalyzes two reactions: the carboxylation of D-ribulose 1,5-bisphosphate, the primary event in carbon dioxide fixation, as well as the oxidative fragmentation of the pentose substrate in the photorespiration process. Both reactions occur simultaneously and in competition at the same active site. This chain is Ribulose bisphosphate carboxylase large chain, found in Tasmannia insipida (Pepperbush).